A 368-amino-acid polypeptide reads, in one-letter code: Endophilin-A2 (368 aa).

A membrane-binding amphipathic helix region spans residues 1–21; that stretch reads MSVAGLKKQFYKASQLVSEKV. Positions 18 to 249 constitute a BAR domain; sequence SEKVGGAEGT…LKRRMREASS (232 aa). A required for dimerization upon membrane association region spans residues 60 to 87; it reads PNPASRAKLTMLNTVSKIRGQVKNPGYP. A coiled-coil region spans residues 181-250; it reads EELRQAMEKF…KRRMREASSR (70 aa). Positions 218-254 are interaction with ARC; sequence LVDAQLDYHRQAVQILDELADKLKRRMREASSRPKRE. Residues 243–308 form a disordered region; the sequence is RMREASSRPK…PSRSMPPLDQ (66 aa). The segment covering 245–263 has biased composition (basic and acidic residues); sequence REASSRPKREYKPKPRELL. Phosphoserine occurs at positions 288 and 292. At Thr-298 the chain carries Phosphothreonine. An SH3 domain is found at 306 to 365; that stretch reads LDQPSCKALYDFEPENDGELGFHEGDIITLTNQIDENWYEGMLDGQSGFFPLSYVEVLVP. Position 315 is a phosphotyrosine (Tyr-315).

Belongs to the endophilin family. Interacts with ARC, SYNJ1 and DNM1. Interacts with PDCD6IP. Interacts with BIN2.

It localises to the cytoplasm. It is found in the early endosome membrane. Its subcellular location is the cell projection. The protein localises to the podosome. Functionally, implicated in endocytosis. May recruit other proteins to membranes with high curvature. In Bos taurus (Bovine), this protein is Endophilin-A2.